Here is a 273-residue protein sequence, read N- to C-terminus: FALAHMVNDLEMVDEFVGKGANGLEIDVTFSSSGQPQYTYHGVPCDCFRSCKRREDFDTYIKYIRHLTTPGDPKFRSNLIMLIFDLKLNGLSQDALRKAGVEMADKLVGNYWQDLAEARAYIVLSMPSIEQSAFVTAFKDELKDFGYDKNLDRIGYDFSGNEDLDETAKVYKQLNINGHIWQADGITNCLPRGDSRLKEAISKRDTPGYQYINKVYTWTIDKASSIANALRLGVDGVMTNYPERVIDALNDSEFSGKFRLATYEDNPWETFKG.

H5 is an active-site residue. E25 and D27 together coordinate Mg(2+). The active-site Nucleophile is the H41. 2 disulfide bridges follow: C45/C51 and C47/C189. D85 contacts Mg(2+).

This sequence belongs to the arthropod phospholipase D family. Class II subfamily. The cofactor is Mg(2+). As to expression, expressed by the venom gland.

The protein resides in the secreted. The catalysed reaction is an N-(acyl)-sphingosylphosphocholine = an N-(acyl)-sphingosyl-1,3-cyclic phosphate + choline. The enzyme catalyses an N-(acyl)-sphingosylphosphoethanolamine = an N-(acyl)-sphingosyl-1,3-cyclic phosphate + ethanolamine. It carries out the reaction a 1-acyl-sn-glycero-3-phosphocholine = a 1-acyl-sn-glycero-2,3-cyclic phosphate + choline. It catalyses the reaction a 1-acyl-sn-glycero-3-phosphoethanolamine = a 1-acyl-sn-glycero-2,3-cyclic phosphate + ethanolamine. In terms of biological role, dermonecrotic toxins cleave the phosphodiester linkage between the phosphate and headgroup of certain phospholipids (sphingolipid and lysolipid substrates), forming an alcohol (often choline) and a cyclic phosphate. This toxin acts on sphingomyelin (SM). It may also act on ceramide phosphoethanolamine (CPE), lysophosphatidylcholine (LPC) and lysophosphatidylethanolamine (LPE), but not on lysophosphatidylserine (LPS), and lysophosphatidylglycerol (LPG). It acts by transphosphatidylation, releasing exclusively cyclic phosphate products as second products. Induces dermonecrosis, hemolysis, increased vascular permeability, edema, inflammatory response, and platelet aggregation. This chain is Dermonecrotic toxin LspiSicTox-betaIE1ii, found in Loxosceles spinulosa (Recluse spider).